Consider the following 231-residue polypeptide: Ribonuclease 3 (231 aa).

Residues 6–135 (AAMLKERFGI…FVGALYLDQG (130 aa)) form the RNase III domain. Residue glutamate 48 participates in Mg(2+) binding. Aspartate 52 is an active-site residue. Mg(2+) contacts are provided by aspartate 121 and glutamate 124. Glutamate 124 is a catalytic residue. Positions 161–230 (DYKTTLQEYL…ARQAYSQLQQ (70 aa)) constitute a DRBM domain. The disordered stretch occupies residues 209 to 231 (WGHSKKEAEQSAARQAYSQLQQK). Residues 220–231 (AARQAYSQLQQK) show a composition bias toward polar residues.

This sequence belongs to the ribonuclease III family. Homodimer. Mg(2+) serves as cofactor.

The protein localises to the cytoplasm. It carries out the reaction Endonucleolytic cleavage to 5'-phosphomonoester.. In terms of biological role, digests double-stranded RNA. Involved in the processing of primary rRNA transcript to yield the immediate precursors to the large and small rRNAs (23S and 16S). Processes some mRNAs, and tRNAs when they are encoded in the rRNA operon. Processes pre-crRNA and tracrRNA of type II CRISPR loci if present in the organism. This Lactiplantibacillus plantarum (strain ATCC BAA-793 / NCIMB 8826 / WCFS1) (Lactobacillus plantarum) protein is Ribonuclease 3.